The sequence spans 122 residues: NADH-quinone oxidoreductase subunit A (122 aa).

Transmembrane regions (helical) follow at residues 10–30, 66–86, and 91–111; these read MIVL…LTLG, IFAL…PWAV, and LGLF…VGLA.

Belongs to the complex I subunit 3 family. As to quaternary structure, NDH-1 is composed of 14 different subunits. Subunits NuoA, H, J, K, L, M, N constitute the membrane sector of the complex.

It is found in the cell membrane. It catalyses the reaction a quinone + NADH + 5 H(+)(in) = a quinol + NAD(+) + 4 H(+)(out). Functionally, NDH-1 shuttles electrons from NADH, via FMN and iron-sulfur (Fe-S) centers, to quinones in the respiratory chain. The immediate electron acceptor for the enzyme in this species is believed to be a menaquinone. Couples the redox reaction to proton translocation (for every two electrons transferred, four hydrogen ions are translocated across the cytoplasmic membrane), and thus conserves the redox energy in a proton gradient. The protein is NADH-quinone oxidoreductase subunit A of Bacillus thuringiensis subsp. konkukian (strain 97-27).